The following is a 187-amino-acid chain: Orotate phosphoribosyltransferase (187 aa).

5-phospho-alpha-D-ribose 1-diphosphate-binding positions include arginine 98, lysine 99, lysine 102, histidine 104, and 128 to 136; that span reads EDVTTTGGS. The orotate site is built by threonine 132 and arginine 160.

The protein belongs to the purine/pyrimidine phosphoribosyltransferase family. PyrE subfamily. Homodimer. Requires Mg(2+) as cofactor.

The catalysed reaction is orotidine 5'-phosphate + diphosphate = orotate + 5-phospho-alpha-D-ribose 1-diphosphate. The protein operates within pyrimidine metabolism; UMP biosynthesis via de novo pathway; UMP from orotate: step 1/2. In terms of biological role, catalyzes the transfer of a ribosyl phosphate group from 5-phosphoribose 1-diphosphate to orotate, leading to the formation of orotidine monophosphate (OMP). This Rhodopseudomonas palustris (strain TIE-1) protein is Orotate phosphoribosyltransferase.